We begin with the raw amino-acid sequence, 530 residues long: Autoinducer-2 kinase (530 aa).

The protein belongs to the FGGY kinase family.

Its subcellular location is the cytoplasm. It carries out the reaction (S)-4,5-dihydroxypentane-2,3-dione + ATP = (2S)-2-hydroxy-3,4-dioxopentyl phosphate + ADP + H(+). Its function is as follows. Catalyzes the phosphorylation of autoinducer-2 (AI-2) to phospho-AI-2, which subsequently inactivates the transcriptional regulator LsrR and leads to the transcription of the lsr operon. Phosphorylates the ring-open form of (S)-4,5-dihydroxypentane-2,3-dione (DPD), which is the precursor to all AI-2 signaling molecules, at the C5 position. This Salmonella paratyphi B (strain ATCC BAA-1250 / SPB7) protein is Autoinducer-2 kinase.